Here is a 513-residue protein sequence, read N- to C-terminus: Cytochrome P450 4d10 (513 aa).

Positions 317 and 457 each coordinate heme.

It belongs to the cytochrome P450 family. Heme serves as cofactor.

The protein resides in the endoplasmic reticulum membrane. It is found in the microsome membrane. May play an important role in the maintenance of specific insect-host plant relationships. May be involved in xenobiotic metabolism. This Drosophila mettleri (Fruit fly) protein is Cytochrome P450 4d10 (Cyp4d10).